A 284-amino-acid polypeptide reads, in one-letter code: 2-dehydro-3-deoxyphosphooctonate aldolase (284 aa).

This sequence belongs to the KdsA family.

It is found in the cytoplasm. The catalysed reaction is D-arabinose 5-phosphate + phosphoenolpyruvate + H2O = 3-deoxy-alpha-D-manno-2-octulosonate-8-phosphate + phosphate. The protein operates within carbohydrate biosynthesis; 3-deoxy-D-manno-octulosonate biosynthesis; 3-deoxy-D-manno-octulosonate from D-ribulose 5-phosphate: step 2/3. It functions in the pathway bacterial outer membrane biogenesis; lipopolysaccharide biosynthesis. The sequence is that of 2-dehydro-3-deoxyphosphooctonate aldolase from Burkholderia multivorans (strain ATCC 17616 / 249).